Reading from the N-terminus, the 299-residue chain is Probable lipid kinase YegS-like (299 aa).

The 132-residue stretch at 2–133 folds into the DAGKc domain; the sequence is ATYPESLLIL…VDIAQVNDKT (132 aa). ATP is bound by residues Thr-40, 66-72, and Thr-95; that span reads GDGTINE. Mg(2+) is bound by residues Leu-215, Asp-218, and Leu-220. The Proton acceptor role is filled by Glu-271.

This sequence belongs to the diacylglycerol/lipid kinase family. YegS lipid kinase subfamily. Requires Mg(2+) as cofactor. The cofactor is Ca(2+).

It localises to the cytoplasm. Functionally, probably phosphorylates lipids; the in vivo substrate is unknown. This chain is Probable lipid kinase YegS-like, found in Enterobacter sp. (strain 638).